Reading from the N-terminus, the 208-residue chain is Proteasome subunit beta 2 (208 aa).

Residues 1 to 14 (MGNELQLENKILKG) constitute a propeptide, removed in mature form; by autocatalysis. Thr-15 (nucleophile) is an active-site residue.

The protein belongs to the peptidase T1B family. In terms of assembly, the 20S proteasome core is composed of 14 alpha and 14 beta subunits that assemble into four stacked heptameric rings, resulting in a barrel-shaped structure. The two inner rings, each composed of seven catalytic beta subunits, are sandwiched by two outer rings, each composed of seven alpha subunits. The catalytic chamber with the active sites is on the inside of the barrel. Has a gated structure, the ends of the cylinder being occluded by the N-termini of the alpha-subunits. Is capped at one or both ends by the proteasome regulatory ATPase, PAN.

Its subcellular location is the cytoplasm. It catalyses the reaction Cleavage of peptide bonds with very broad specificity.. The formation of the proteasomal ATPase PAN-20S proteasome complex, via the docking of the C-termini of PAN into the intersubunit pockets in the alpha-rings, triggers opening of the gate for substrate entry. Interconversion between the open-gate and close-gate conformations leads to a dynamic regulation of the 20S proteasome proteolysis activity. Functionally, component of the proteasome core, a large protease complex with broad specificity involved in protein degradation. The polypeptide is Proteasome subunit beta 2 (Saccharolobus solfataricus (strain ATCC 35092 / DSM 1617 / JCM 11322 / P2) (Sulfolobus solfataricus)).